We begin with the raw amino-acid sequence, 265 residues long: Small ribosomal subunit protein uS5 (265 aa).

Low complexity predominate over residues Met1–Arg25. Residues Met1–Trp49 form a disordered region. An N-acetylalanine modification is found at Ala2. Residues Leu89–Val152 enclose the S5 DRBM domain.

It belongs to the universal ribosomal protein uS5 family.

Functionally, component of the ribosome, a large ribonucleoprotein complex responsible for the synthesis of proteins in the cell. The small ribosomal subunit (SSU) binds messenger RNAs (mRNAs) and translates the encoded message by selecting cognate aminoacyl-transfer RNA (tRNA) molecules. The large subunit (LSU) contains the ribosomal catalytic site termed the peptidyl transferase center (PTC), which catalyzes the formation of peptide bonds, thereby polymerizing the amino acids delivered by tRNAs into a polypeptide chain. The nascent polypeptides leave the ribosome through a tunnel in the LSU and interact with protein factors that function in enzymatic processing, targeting, and the membrane insertion of nascent chains at the exit of the ribosomal tunnel. Plays a role in the assembly and function of the 40S ribosomal subunit. Mutations in this protein affects the control of translational fidelity. Involved in nucleolar processing of pre-18S ribosomal RNA and ribosome assembly. This Dictyostelium discoideum (Social amoeba) protein is Small ribosomal subunit protein uS5 (rps2).